The following is a 341-amino-acid chain: S-adenosylmethionine:tRNA ribosyltransferase-isomerase (341 aa).

Belongs to the QueA family. Monomer.

It is found in the cytoplasm. It catalyses the reaction 7-aminomethyl-7-carbaguanosine(34) in tRNA + S-adenosyl-L-methionine = epoxyqueuosine(34) in tRNA + adenine + L-methionine + 2 H(+). It participates in tRNA modification; tRNA-queuosine biosynthesis. In terms of biological role, transfers and isomerizes the ribose moiety from AdoMet to the 7-aminomethyl group of 7-deazaguanine (preQ1-tRNA) to give epoxyqueuosine (oQ-tRNA). This chain is S-adenosylmethionine:tRNA ribosyltransferase-isomerase, found in Chlorobium luteolum (strain DSM 273 / BCRC 81028 / 2530) (Pelodictyon luteolum).